A 292-amino-acid chain; its full sequence is Ribosomal protein L11 methyltransferase (292 aa).

Residues Thr-143, Gly-164, Asp-186, and Asn-227 each coordinate S-adenosyl-L-methionine.

The protein belongs to the methyltransferase superfamily. PrmA family.

The protein localises to the cytoplasm. The catalysed reaction is L-lysyl-[protein] + 3 S-adenosyl-L-methionine = N(6),N(6),N(6)-trimethyl-L-lysyl-[protein] + 3 S-adenosyl-L-homocysteine + 3 H(+). In terms of biological role, methylates ribosomal protein L11. This chain is Ribosomal protein L11 methyltransferase, found in Hahella chejuensis (strain KCTC 2396).